Reading from the N-terminus, the 248-residue chain is 3-deoxy-manno-octulosonate cytidylyltransferase (248 aa).

Belongs to the KdsB family.

It is found in the cytoplasm. The catalysed reaction is 3-deoxy-alpha-D-manno-oct-2-ulosonate + CTP = CMP-3-deoxy-beta-D-manno-octulosonate + diphosphate. Its pathway is nucleotide-sugar biosynthesis; CMP-3-deoxy-D-manno-octulosonate biosynthesis; CMP-3-deoxy-D-manno-octulosonate from 3-deoxy-D-manno-octulosonate and CTP: step 1/1. The protein operates within bacterial outer membrane biogenesis; lipopolysaccharide biosynthesis. Functionally, activates KDO (a required 8-carbon sugar) for incorporation into bacterial lipopolysaccharide in Gram-negative bacteria. This chain is 3-deoxy-manno-octulosonate cytidylyltransferase, found in Shigella boydii serotype 18 (strain CDC 3083-94 / BS512).